The sequence spans 69 residues: Putative membrane protein insertion efficiency factor (69 aa).

Belongs to the UPF0161 family.

The protein resides in the cell inner membrane. Functionally, could be involved in insertion of integral membrane proteins into the membrane. This is Putative membrane protein insertion efficiency factor from Dechloromonas aromatica (strain RCB).